A 275-amino-acid polypeptide reads, in one-letter code: Envelope glycoprotein (275 aa).

3 disulfide bridges follow: C1–C10, C18–C27, and C58–C62. N122 carries N-linked (GlcNAc...) asparagine; by host glycosylation. Cystine bridges form between C164/C194, C187/C239, C204/C209, and C240/C245.

The protein belongs to the hantavirus envelope glycoprotein family. As to quaternary structure, homodimer. Homotetramer; forms heterotetrameric Gn-Gc spikes in the pre-fusion conformation. Homotrimer; forms homotrimer in the post-fusion conformation at acidic pH. Interacts (via C-terminus) with the nucleoprotein. Post-translationally, envelope polyprotein precursor is quickly cleaved in vivo just after synthesis, presumably by host signal peptidase.

The protein localises to the virion membrane. Its subcellular location is the host cell surface. It is found in the host Golgi apparatus membrane. It localises to the host endoplasmic reticulum membrane. In terms of biological role, forms homotetramers with glycoprotein N at the surface of the virion. Attaches the virion to host cell receptors including integrin ITGAV/ITGB3. This attachment induces virion internalization predominantly through clathrin-dependent endocytosis. Class II fusion protein that promotes fusion of viral membrane with host endosomal membrane after endocytosis of the virion. The polypeptide is Envelope glycoprotein (GP) (Homo sapiens (Human)).